Here is a 324-residue protein sequence, read N- to C-terminus: Beta-ketoacyl-[acyl-carrier-protein] synthase III (324 aa).

Catalysis depends on residues Cys112 and His249. The segment at Gln250–Arg254 is ACP-binding. Residue Asn279 is part of the active site.

It belongs to the thiolase-like superfamily. FabH family. As to quaternary structure, homodimer.

Its subcellular location is the cytoplasm. The catalysed reaction is malonyl-[ACP] + acetyl-CoA + H(+) = 3-oxobutanoyl-[ACP] + CO2 + CoA. The protein operates within lipid metabolism; fatty acid biosynthesis. Functionally, catalyzes the condensation reaction of fatty acid synthesis by the addition to an acyl acceptor of two carbons from malonyl-ACP. Catalyzes the first condensation reaction which initiates fatty acid synthesis and may therefore play a role in governing the total rate of fatty acid production. Possesses both acetoacetyl-ACP synthase and acetyl transacylase activities. Its substrate specificity determines the biosynthesis of branched-chain and/or straight-chain of fatty acids. The polypeptide is Beta-ketoacyl-[acyl-carrier-protein] synthase III (Streptococcus equi subsp. zooepidemicus (strain MGCS10565)).